The chain runs to 732 residues: Beta-galactosidase 5 (732 aa).

The signal sequence occupies residues 1 to 23; sequence MGTTILVLSKILTFLLTTMLIGS. The Proton donor role is filled by glutamate 187. Catalysis depends on glutamate 256, which acts as the Nucleophile. N-linked (GlcNAc...) asparagine glycosylation is present at asparagine 466.

The protein belongs to the glycosyl hydrolase 35 family. In terms of tissue distribution, expressed in leaves and flowers.

The protein localises to the secreted. Its subcellular location is the extracellular space. It is found in the apoplast. The enzyme catalyses Hydrolysis of terminal non-reducing beta-D-galactose residues in beta-D-galactosides.. The protein is Beta-galactosidase 5 (BGAL5) of Arabidopsis thaliana (Mouse-ear cress).